The following is a 683-amino-acid chain: Probable serine/threonine-protein kinase HAL5-like (683 aa).

2 disordered regions span residues 1–90 (MPQQ…VSDE) and 157–200 (YPQN…SKKA). The span at 36–48 (PSSAATSDSSEMS) shows a compositional bias: low complexity. Residues 50–60 (AQGGRGNGLLG) are compositionally biased toward gly residues. Residues 69 to 85 (SPKSEAQFTQRNKSAES) are compositionally biased toward polar residues. The Protein kinase domain maps to 364–670 (GKCIGMIGQG…IPKLLDTPWM (307 aa)). ATP-binding positions include 370-378 (IGQGAYGTV) and K411. The active-site Proton acceptor is the D521.

This sequence belongs to the protein kinase superfamily. CAMK Ser/Thr protein kinase family. NPR/HAL subfamily. HAL5 sub-subfamily.

It catalyses the reaction L-seryl-[protein] + ATP = O-phospho-L-seryl-[protein] + ADP + H(+). It carries out the reaction L-threonyl-[protein] + ATP = O-phospho-L-threonyl-[protein] + ADP + H(+). This chain is Probable serine/threonine-protein kinase HAL5-like, found in Eremothecium gossypii (strain ATCC 10895 / CBS 109.51 / FGSC 9923 / NRRL Y-1056) (Yeast).